A 59-amino-acid chain; its full sequence is Conorfamide-Vc1 (59 aa).

Residues 1 to 19 (MSGRGFLLLALLLLVTVEA) form the signal peptide. Positions 20-25 (TKVEKK) are excised as a propeptide. Positions 32–39 (AWSGPRNR) are positively charged region crucial for activity against MRGPRX1 receptors. Position 43 is a phenylalanine amide (Phe-43). A propeptide spanning residues 45 to 59 (RRDMQSPLLSERLRL) is cleaved from the precursor.

Belongs to the FARP (FMRFamide related peptide) family. As to expression, expressed by the venom duct.

It is found in the secreted. In terms of biological role, this peptide activates human and mouse sensory neuron-specific G-protein coupled receptors MRGPRX1. The activity on human receptors has been measured (EC(50)=1.8 uM). Compared with the agonist chloroquine (anti-malaria drug), it is 200-fold more potent. The peptide also causes an increase in cytosolic calcium in a specific subset of DRG neurons, and, in contrast to other Conus venom peptides, the peptide also affects a large fraction of the non-neuronal cells. In vivo, when intracranially injected into mice, it principally renders mice unable to move, and at very low doses, it causes hyperactivity. It also induces itch sensation, since intradermal cheek injection into humanized transgenic mouse (mouse MRGPRX1 replaced by human MRGPRX1) induces scratching. In vivo, when tested at high doses (10 uM) on zebrafish larvae, it induces a range of behavioral effects ranging from an early hypoactivity during the first hour of treatment to an increase in movement during the following hours when the larvae are submitted to strobe light phases. This chain is Conorfamide-Vc1, found in Conus victoriae (Queen Victoria cone).